The following is a 703-amino-acid chain: MAVDITTDLNKVRNIGIMAHIDAGKTTTTERILFYTGITYKIGEVHEGAATMDWMEQEQERGITITSAATTCWWKDHQINIIDTPGHVDFTAEVERSLRVLDGAVAVFDGVAGVEPQTMTVWRQANKYAVPRMCFVNKLDRTGADFFRCVDMMVERLNSTPLVLQLPIGAESDFLGVVDLVGMRALTWRGETKMGEDYEVEEIPAELAEQAAEYREKLLETLSEADDDVMEKYLEGEDFTVEELEAAIRRATLADKVNPVLCGTAFKNKGVQPLLDAVVKFLPSPLDIGEIIGHSVKDENEKVSRKPADSEPFSGLAYKIASDPHLGKLIYIRVYSGKLEAGSTVVNSVNGRKERIGKVYQMHANKREEIASVGAGQIVAVMGLKDTKTGHTLSDPQHQVVLESMTFPAPVIEVAIEPKTKSDQEKLGTAIQRLSDEDPTFTVKSDEETGQTIIAGMGELHLEILVDRMRREFRVEATVGKPQVAYRETIRRKVENHSYTHKKQTGGSGQFAKVIISLEPSIDPETNTGAGYEFVNNVSGGRVPREYIPSVDQGAQEAMEFGVLAGYPMVDVKVTLEDGAYHDVDSSELAFKIAGNQAFKEAARQAKPVLLEPMFAVEVTTPETFLGTVIGDINSRRGHIQAQEERHGDMVISALVPLSEMFGYVGDLRSKTSGQASYSMEFDSYAEVPQGIADEIIKKVRGE.

The tr-type G domain maps to 10–286; the sequence is NKVRNIGIMA…AVVKFLPSPL (277 aa). GTP is bound by residues 19–26, 83–87, and 137–140; these read AHIDAGKT, DTPGH, and NKLD.

Belongs to the TRAFAC class translation factor GTPase superfamily. Classic translation factor GTPase family. EF-G/EF-2 subfamily.

The protein localises to the cytoplasm. Catalyzes the GTP-dependent ribosomal translocation step during translation elongation. During this step, the ribosome changes from the pre-translocational (PRE) to the post-translocational (POST) state as the newly formed A-site-bound peptidyl-tRNA and P-site-bound deacylated tRNA move to the P and E sites, respectively. Catalyzes the coordinated movement of the two tRNA molecules, the mRNA and conformational changes in the ribosome. The protein is Elongation factor G of Nocardioides sp. (strain ATCC BAA-499 / JS614).